The chain runs to 125 residues: Large ribosomal subunit protein bL12 (125 aa).

Belongs to the bacterial ribosomal protein bL12 family. In terms of assembly, homodimer. Part of the ribosomal stalk of the 50S ribosomal subunit. Forms a multimeric L10(L12)X complex, where L10 forms an elongated spine to which 2 to 4 L12 dimers bind in a sequential fashion. Binds GTP-bound translation factors.

Functionally, forms part of the ribosomal stalk which helps the ribosome interact with GTP-bound translation factors. Is thus essential for accurate translation. The protein is Large ribosomal subunit protein bL12 of Nitrobacter winogradskyi (strain ATCC 25391 / DSM 10237 / CIP 104748 / NCIMB 11846 / Nb-255).